Here is a 307-residue protein sequence, read N- to C-terminus: Agmatinase (307 aa).

The Mn(2+) site is built by histidine 128, aspartate 151, histidine 153, aspartate 155, aspartate 232, and aspartate 234.

This sequence belongs to the arginase family. Agmatinase subfamily. Requires Mn(2+) as cofactor.

The catalysed reaction is agmatine + H2O = urea + putrescine. It functions in the pathway amine and polyamine biosynthesis; putrescine biosynthesis via agmatine pathway; putrescine from agmatine: step 1/1. Catalyzes the formation of putrescine from agmatine. The sequence is that of Agmatinase from Neisseria gonorrhoeae (strain ATCC 700825 / FA 1090).